Here is a 507-residue protein sequence, read N- to C-terminus: ATP synthase subunit alpha, chloroplastic (507 aa).

170 to 177 is an ATP binding site; that stretch reads GDRQTGKT.

The protein belongs to the ATPase alpha/beta chains family. As to quaternary structure, F-type ATPases have 2 components, CF(1) - the catalytic core - and CF(0) - the membrane proton channel. CF(1) has five subunits: alpha(3), beta(3), gamma(1), delta(1), epsilon(1). CF(0) has four main subunits: a, b, b' and c.

It localises to the plastid. It is found in the chloroplast thylakoid membrane. The catalysed reaction is ATP + H2O + 4 H(+)(in) = ADP + phosphate + 5 H(+)(out). Functionally, produces ATP from ADP in the presence of a proton gradient across the membrane. The alpha chain is a regulatory subunit. This chain is ATP synthase subunit alpha, chloroplastic, found in Oryza nivara (Indian wild rice).